Consider the following 30-residue polypeptide: Basic phospholipase A2 CM-I (30 aa).

It belongs to the phospholipase A2 family. Group I subfamily. The cofactor is Ca(2+). In terms of tissue distribution, expressed by the venom gland.

It is found in the secreted. The enzyme catalyses a 1,2-diacyl-sn-glycero-3-phosphocholine + H2O = a 1-acyl-sn-glycero-3-phosphocholine + a fatty acid + H(+). Its function is as follows. Snake venom phospholipase A2 (PLA2) that shows weak anticoagulant activity. Is more catalytically active than the strong anticoagulant protein CM-IV found in this venom. Acts by inhibiting the complex composed of tissue factor (F3) and coagulation factor VIIa (F7) (TF-VIIa complex) by only enzymatic mechanism. PLA2 catalyzes the calcium-dependent hydrolysis of the 2-acyl groups in 3-sn-phosphoglycerides. In Naja nigricollis (Black-necked spitting cobra), this protein is Basic phospholipase A2 CM-I.